A 96-amino-acid polypeptide reads, in one-letter code: Large ribosomal subunit protein bL27 (96 aa).

The propeptide occupies 1–9 (MLNMNLQLL).

Belongs to the bacterial ribosomal protein bL27 family. Post-translationally, the N-terminus is cleaved by ribosomal processing cysteine protease Prp.

The sequence is that of Large ribosomal subunit protein bL27 from Clostridioides difficile (strain 630) (Peptoclostridium difficile).